The sequence spans 530 residues: T-complex protein 1 subunit zeta-2 (530 aa).

It belongs to the TCP-1 chaperonin family. As to quaternary structure, component of the chaperonin-containing T-complex (TRiC), a heterooligomeric complex of about 850 to 900 kDa that forms two stacked rings, 12 to 16 nm in diameter. Testis-specific.

It localises to the cytoplasm. Its function is as follows. Component of the chaperonin-containing T-complex (TRiC), a molecular chaperone complex that assists the folding of proteins upon ATP hydrolysis. The chain is T-complex protein 1 subunit zeta-2 (CCT6B) from Homo sapiens (Human).